Here is a 74-residue protein sequence, read N- to C-terminus: MDMVSLKFIGIGLMAIGMYGAALGVSNIFSSLLSSIARNPSAAENLQRMALIGAGLAEAMGLFSFVIAMLLIFS.

2 helical membrane-spanning segments follow: residues 8–28 (FIGI…VSNI) and 52–72 (IGAG…MLLI).

This sequence belongs to the ATPase C chain family. F-type ATPases have 2 components, F(1) - the catalytic core - and F(0) - the membrane proton channel. F(1) has five subunits: alpha(3), beta(3), gamma(1), delta(1), epsilon(1). F(0) has three main subunits: a(1), b(2) and c(10-14). The alpha and beta chains form an alternating ring which encloses part of the gamma chain. F(1) is attached to F(0) by a central stalk formed by the gamma and epsilon chains, while a peripheral stalk is formed by the delta and b chains.

It is found in the cell inner membrane. Functionally, f(1)F(0) ATP synthase produces ATP from ADP in the presence of a proton or sodium gradient. F-type ATPases consist of two structural domains, F(1) containing the extramembraneous catalytic core and F(0) containing the membrane proton channel, linked together by a central stalk and a peripheral stalk. During catalysis, ATP synthesis in the catalytic domain of F(1) is coupled via a rotary mechanism of the central stalk subunits to proton translocation. Key component of the F(0) channel; it plays a direct role in translocation across the membrane. A homomeric c-ring of between 10-14 subunits forms the central stalk rotor element with the F(1) delta and epsilon subunits. This is ATP synthase subunit c from Rickettsia felis (strain ATCC VR-1525 / URRWXCal2) (Rickettsia azadi).